We begin with the raw amino-acid sequence, 211 residues long: Small ribosomal subunit protein uS3 (211 aa).

In terms of domain architecture, KH type-2 spans 38 to 106; that stretch reads LRNFLKKRLF…EIYLNIQEVR (69 aa).

This sequence belongs to the universal ribosomal protein uS3 family. Part of the 30S ribosomal subunit. Forms a tight complex with proteins S10 and S14.

Its function is as follows. Binds the lower part of the 30S subunit head. Binds mRNA in the 70S ribosome, positioning it for translation. The protein is Small ribosomal subunit protein uS3 of Geobacter metallireducens (strain ATCC 53774 / DSM 7210 / GS-15).